Consider the following 144-residue polypeptide: uncharacterized protein (144 aa).

Residues 125–135 (PQQQNNHQLQS) are compositionally biased toward polar residues. The tract at residues 125 to 144 (PQQQNNHQLQSKPKAASISR) is disordered.

This is an uncharacterized protein from Rickettsia prowazekii (strain Madrid E).